The chain runs to 509 residues: MISSKATSAARACARTSRVMQQQQRRLLATVVSSSSLFPGEPSSPHVVTSQIPGPKSKELSDRIGTFQENRTHGFVVDYAKSQGNWIADADGNVLLDMFAQIASIAIGYNNPDLLALAKTDEFITATMNRAALGSFPPTNWQELVETSFGTVKPDGLNNIFTAMCGSCANENAFKASFMAYRARERGEKAEFTPEEMSSCMKNQSPGSPDLSILSFTSAFHGRLFGSLSATRSKAIHKLDIPSFNWPVVEWPDVKYPFAQNSRENAEAEKVALAAVEEAIVSSKKTGSSYGPVAALIVEPIQSEGGDNHASPAFFQGLRDVTKKHGVFMIVDEVQTGVGATGAFWAHSKWNLTSPPDFVTFSKKMQAAGFYHNIETRPSLPYRNYNTWMGDPARTLQARQIIRTIQDHNLIQKTDKVGNYIYEKLFDLIENGAGRGKIEKLRGENAGTFLAFDGRTAKVRDQLIMEMRKLGVHMGGCGDKALRLRPMLVFEQKHADIFLDKLETALGQL.

166–167 (GS) is a pyridoxal 5'-phosphate binding site. R223 provides a ligand contact to substrate. Position 363 is an N6-(pyridoxal phosphate)lysine (K363). T387 is a binding site for pyridoxal 5'-phosphate.

This sequence belongs to the class-III pyridoxal-phosphate-dependent aminotransferase family. Homodimer. Pyridoxal 5'-phosphate serves as cofactor.

The protein localises to the cytoplasm. The enzyme catalyses 4-aminobutanoate + 2-oxoglutarate = succinate semialdehyde + L-glutamate. In terms of biological role, deaminates gamma-aminobutyric acid (GABA) to succinate-semialdehyde, which in turn is converted to succinate by the succinate semialdehyde dehydrogenase. Not required for the utilization of GABA as nitrogen source. The polypeptide is 4-aminobutyrate aminotransferase (GATA) (Mycosarcoma maydis (Corn smut fungus)).